A 1190-amino-acid chain; its full sequence is Phosphatidylinositol-3,5-bisphosphate 3-phosphatase MTMR4 (1190 aa).

Ser8 is subject to Phosphoserine. The Myotubularin phosphatase domain occupies 153 to 570; sequence EHIRCRQEAE…RALHLWTAVY (418 aa). The a 1,2-diacyl-sn-glycero-3-phospho-(1D-myo-inositol-3,5-bisphosphate) site is built by Asn320, Asn345, and Ile346. Asn320, Asn345, and Ile346 together coordinate a 1,2-diacyl-sn-glycero-3-phospho-(1D-myo-inositol-3-phosphate). The Phosphocysteine intermediate role is filled by Cys407. Positions 408, 409, 410, 411, 412, 413, 449, and 453 each coordinate a 1,2-diacyl-sn-glycero-3-phospho-(1D-myo-inositol-3,5-bisphosphate). A 1,2-diacyl-sn-glycero-3-phospho-(1D-myo-inositol-3-phosphate) is bound by residues Ser408, Asp409, Gly410, Trp411, Asp412, and Arg413. Arg453 serves as a coordination point for a 1,2-diacyl-sn-glycero-3-phospho-(1D-myo-inositol-3-phosphate). Residues Ser610 and Ser629 each carry the phosphoserine modification. Disordered regions lie at residues 616–694, 724–749, and 773–848; these read SACD…FKGH, ETEA…GKPP, and DFPE…PSSV. The segment covering 618 to 637 has biased composition (polar residues); sequence CDTSSPLTRTSSDPNLNNHS. Polar residues predominate over residues 782–847; it reads LTGTPQQPHL…SISHQEQPSS (66 aa). Positions 999 to 1003 match the PY-motif; substrate motif for NEDD4 motif; sequence VPPLY. Residues 1020-1052 adopt a coiled-coil conformation; it reads LRQIEAGYRQEVEQLRRQVRELQMRLDIRHCCA. The segment at 1109 to 1169 adopts an FYVE-type zinc-finger fold; sequence DHMASHCFNC…VCNSCYEHIQ (61 aa). Zn(2+) contacts are provided by Cys1115, Cys1118, Cys1131, Cys1134, Cys1139, Cys1142, Cys1161, and Cys1164.

The protein belongs to the protein-tyrosine phosphatase family. Non-receptor class myotubularin subfamily. In terms of assembly, homooligomeric. Forms MTMR3:MTMR4 heterooligomers; regulates the localization of both proteins. The MTMR3:MTMR4 heterooligomer can also recruit both CEP55 and PLK1; occurs during early mitosis, regulates the phosphorylation of CEP55 by PLK1 and its recruitment to the midbody where it can mediate cell abscission. Interacts with SMAD2 and SMAD3; negatively regulates TGF-beta signaling through SMAD2 and SMAD3 dephosphorylation and retention in endosomes. Interacts with SMAD1; negatively regulates BMP signaling through SMAD1 dephosphorylation and retention in endosomes. Ubiquitinated. Ubiquitination by NEDD4 probably leads to proteasomal degradation. Post-translationally, phosphorylated by CDK1 during mitosis.

It is found in the early endosome membrane. The protein localises to the recycling endosome membrane. It localises to the late endosome membrane. Its subcellular location is the cytoplasmic vesicle. The protein resides in the phagosome membrane. It carries out the reaction a 1,2-diacyl-sn-glycero-3-phospho-(1D-myo-inositol-3-phosphate) + H2O = a 1,2-diacyl-sn-glycero-3-phospho-(1D-myo-inositol) + phosphate. The catalysed reaction is a 1,2-diacyl-sn-glycero-3-phospho-(1D-myo-inositol-3,5-bisphosphate) + H2O = a 1,2-diacyl-sn-glycero-3-phospho-(1D-myo-inositol-5-phosphate) + phosphate. The enzyme catalyses 1,2-dioctanoyl-sn-glycero-3-phospho-(1-D-myo-inositol-3-phosphate) + H2O = 1,2-dioctanoyl-sn-glycero-3-phospho-(1D-myo-inositol) + phosphate. It catalyses the reaction 1,2-dioctanoyl-sn-glycero-3-phospho-(1D-myo-inositol-3,5-bisphosphate) + H2O = 1,2-dioctanoyl-sn-glycero-3-phospho-(1D-myo-inositol-5-phosphate) + phosphate. Its function is as follows. Lipid phosphatase that specifically dephosphorylates the D-3 position of phosphatidylinositol 3-phosphate and phosphatidylinositol 3,5-bisphosphate, generating phosphatidylinositol and phosphatidylinositol 5-phosphate. Decreases the levels of phosphatidylinositol 3-phosphate, a phospholipid found in cell membranes where it acts as key regulator of both cell signaling and intracellular membrane traffic, in a subset of endosomal membranes to negatively regulate both endocytic recycling and trafficking and/or maturation of endosomes toward lysosomes. Through phosphatidylinositol 3-phosphate turnover in phagosome membranes regulates phagocytosis and phagosome maturation. By decreasing phosphatidylinositol 3-monophosphate (PI3P) levels in immune cells it can also regulate the innate immune response. Beside its lipid phosphatase activity, can also function as a molecular adapter to regulate midbody abscission during mitotic cytokinesis. Can also negatively regulate TGF-beta and BMP signaling through Smad proteins dephosphorylation and retention in endosomes. This is Phosphatidylinositol-3,5-bisphosphate 3-phosphatase MTMR4 from Mus musculus (Mouse).